The following is a 137-amino-acid chain: Molluscan insulin-related peptide 2 (137 aa).

The first 31 residues, 1-31 (MVGVRLVFTNAFVVTVLLTLLLDVVVKPAEG), serve as a signal peptide directing secretion. Position 32 is a pyrrolidone carboxylic acid (Q32). Disulfide bonds link C47–C123, C59–C136, and C122–C127. Residues 71–83 (DAETGWLLPETMV) constitute a propeptide, C-beta peptide like. Residues 86–110 (NAETDLDDPLRNIKLSSESALTYLT) constitute a propeptide, C-alpha peptide like. Q113 is subject to Pyrrolidone carboxylic acid.

This sequence belongs to the insulin family. Heterodimer of a B chain and an A chain linked by two disulfide bonds. In terms of tissue distribution, expressed in the cerebral light-green cells which are giant neuroendocrines cells involved in the control of growth.

It is found in the cytoplasmic vesicle. The protein localises to the secretory vesicle. The chain is Molluscan insulin-related peptide 2 from Lymnaea stagnalis (Great pond snail).